Reading from the N-terminus, the 600-residue chain is Zinc finger and BTB domain-containing protein 46 (600 aa).

Residues 31–99 enclose the BTB domain; it reads CDACVVVEGK…MYSAHLALTS (69 aa). The interval 173-222 is disordered; it reads RRTSPANSSGDSAIASCHEGGSSYGKEDQEPKADGPDDVSSQSLWPGDVG. Basic and acidic residues predominate over residues 197-207; that stretch reads GKEDQEPKADG. A Glycyl lysine isopeptide (Lys-Gly) (interchain with G-Cter in SUMO2) cross-link involves residue Lys229. Ser234 bears the Phosphoserine mark. The interval 235-278 is disordered; that stretch reads PSHYGGSELPSSKDTAIQNSLSEQGSGDGWQPTGRRKNRKNKET. Polar residues predominate over residues 243–259; it reads LPSSKDTAIQNSLSEQG. C2H2-type zinc fingers lie at residues 418 to 436 and 446 to 468; these read FKCP…LKRH and YPCE…TLVH. Residues 513–600 are disordered; it reads LDHGGGGEGS…EPDKDFAWIS (88 aa). Over residues 533–555 the composition is skewed to acidic residues; that stretch reads YLEDPDDPRGEAEEELVEDEDED. Basic and acidic residues-rich tracts occupy residues 556 to 574 and 591 to 600; these read VAKW…LLGD and EPDKDFAWIS.

Sumoylated. Desumoylation by DESI1 reverses transcriptional repression activity.

The protein localises to the nucleus. Functionally, functions as a transcriptional repressor for PRDM1. In Mus musculus (Mouse), this protein is Zinc finger and BTB domain-containing protein 46 (Zbtb46).